Consider the following 435-residue polypeptide: Histidine--tRNA ligase (435 aa).

Belongs to the class-II aminoacyl-tRNA synthetase family. Homodimer.

Its subcellular location is the cytoplasm. The catalysed reaction is tRNA(His) + L-histidine + ATP = L-histidyl-tRNA(His) + AMP + diphosphate + H(+). The protein is Histidine--tRNA ligase of Synechococcus elongatus (strain ATCC 33912 / PCC 7942 / FACHB-805) (Anacystis nidulans R2).